The following is a 409-amino-acid chain: Dihydrolipoyllysine-residue succinyltransferase component of 2-oxoglutarate dehydrogenase complex (409 aa).

The Lipoyl-binding domain occupies 2 to 77; it reads AIEILVPDLP…VSKQLLGKIS (76 aa). An N6-lipoyllysine modification is found at Lys-43. The span at 83–107 shows a compositional bias: polar residues; the sequence is DVSSATLKATNEPTPSDRQNAAIEN. Residues 83 to 114 are disordered; it reads DVSSATLKATNEPTPSDRQNAAIENSHNHNAD. Positions 114-151 constitute a Peripheral subunit-binding (PSBD) domain; the sequence is DQSPVIRRLLAEHDLQADQIQGSGVGGRLTREDIEREI. Residues His-380 and Asp-384 contribute to the active site.

Belongs to the 2-oxoacid dehydrogenase family. Forms a 24-polypeptide structural core with octahedral symmetry. Part of the 2-oxoglutarate dehydrogenase (OGDH) complex composed of E1 (2-oxoglutarate dehydrogenase), E2 (dihydrolipoamide succinyltransferase) and E3 (dihydrolipoamide dehydrogenase); the complex contains multiple copies of the three enzymatic components (E1, E2 and E3). (R)-lipoate serves as cofactor.

The enzyme catalyses N(6)-[(R)-dihydrolipoyl]-L-lysyl-[protein] + succinyl-CoA = N(6)-[(R)-S(8)-succinyldihydrolipoyl]-L-lysyl-[protein] + CoA. The protein operates within amino-acid degradation; L-lysine degradation via saccharopine pathway; glutaryl-CoA from L-lysine: step 6/6. E2 component of the 2-oxoglutarate dehydrogenase (OGDH) complex which catalyzes the second step in the conversion of 2-oxoglutarate to succinyl-CoA and CO(2). The chain is Dihydrolipoyllysine-residue succinyltransferase component of 2-oxoglutarate dehydrogenase complex (sucB) from Haemophilus influenzae (strain ATCC 51907 / DSM 11121 / KW20 / Rd).